We begin with the raw amino-acid sequence, 156 residues long: Small ribosomal subunit protein uS7 (156 aa).

It belongs to the universal ribosomal protein uS7 family. As to quaternary structure, part of the 30S ribosomal subunit. Contacts proteins S9 and S11.

One of the primary rRNA binding proteins, it binds directly to 16S rRNA where it nucleates assembly of the head domain of the 30S subunit. Is located at the subunit interface close to the decoding center, probably blocks exit of the E-site tRNA. The sequence is that of Small ribosomal subunit protein uS7 from Azorhizobium caulinodans (strain ATCC 43989 / DSM 5975 / JCM 20966 / LMG 6465 / NBRC 14845 / NCIMB 13405 / ORS 571).